We begin with the raw amino-acid sequence, 327 residues long: HTH-type transcriptional regulator EbgR (327 aa).

In terms of domain architecture, HTH lacI-type spans 1–57; the sequence is MATLKDIAIEAGVSLATVSRVLNDDPTLNVKEETKHRILEIAEKLEYKTSSARKLQT. The segment at residues 4–23 is a DNA-binding region (H-T-H motif); it reads LKDIAIEAGVSLATVSRVLN.

Repressor for beta galactosidase alpha and beta subunits (ebgA and ebgC). Binds lactose as an inducer. The polypeptide is HTH-type transcriptional regulator EbgR (ebgR) (Escherichia coli (strain K12)).